The primary structure comprises 363 residues: Histidinol-phosphate aminotransferase (363 aa).

The residue at position 220 (K220) is an N6-(pyridoxal phosphate)lysine.

This sequence belongs to the class-II pyridoxal-phosphate-dependent aminotransferase family. Histidinol-phosphate aminotransferase subfamily. In terms of assembly, homodimer. Pyridoxal 5'-phosphate serves as cofactor.

It carries out the reaction L-histidinol phosphate + 2-oxoglutarate = 3-(imidazol-4-yl)-2-oxopropyl phosphate + L-glutamate. It functions in the pathway amino-acid biosynthesis; L-histidine biosynthesis; L-histidine from 5-phospho-alpha-D-ribose 1-diphosphate: step 7/9. In Chlorobium chlorochromatii (strain CaD3), this protein is Histidinol-phosphate aminotransferase.